A 385-amino-acid chain; its full sequence is Serine/threonine-protein kinase H2 (385 aa).

Positions 63–320 (YDIKALIGTG…AGQALDHPWV (258 aa)) constitute a Protein kinase domain. Residues 69–77 (IGTGSFSRV) and K92 each bind ATP. A disordered region spans residues 342-367 (QRASPHSQSPGSAQSSKSHYSHKSRH). Over residues 344–359 (ASPHSQSPGSAQSSKS) the composition is skewed to low complexity.

The protein belongs to the protein kinase superfamily. CAMK Ser/Thr protein kinase family.

It catalyses the reaction L-seryl-[protein] + ATP = O-phospho-L-seryl-[protein] + ADP + H(+). The enzyme catalyses L-threonyl-[protein] + ATP = O-phospho-L-threonyl-[protein] + ADP + H(+). This Homo sapiens (Human) protein is Serine/threonine-protein kinase H2 (PSKH2).